Consider the following 111-residue polypeptide: Ribosome-binding factor A (111 aa).

The protein belongs to the RbfA family. As to quaternary structure, monomer. Binds 30S ribosomal subunits, but not 50S ribosomal subunits or 70S ribosomes.

The protein resides in the cytoplasm. Functionally, one of several proteins that assist in the late maturation steps of the functional core of the 30S ribosomal subunit. Associates with free 30S ribosomal subunits (but not with 30S subunits that are part of 70S ribosomes or polysomes). Required for efficient processing of 16S rRNA. May interact with the 5'-terminal helix region of 16S rRNA. The protein is Ribosome-binding factor A of Helicobacter pylori (strain HPAG1).